Here is a 662-residue protein sequence, read N- to C-terminus: Translation factor GUF1, mitochondrial (662 aa).

Residues 1–28 (MYIHSSRTVLARYGSRTPLLRPSVLGRY) constitute a mitochondrion transit peptide. The tr-type G domain maps to 62–244 (ENYRNFSIVA…AIVDHIPAPD (183 aa)). GTP contacts are provided by residues 71-78 (AHVDHGKS), 137-141 (DTPGH), and 191-194 (NKID).

This sequence belongs to the TRAFAC class translation factor GTPase superfamily. Classic translation factor GTPase family. LepA subfamily.

The protein localises to the mitochondrion inner membrane. It carries out the reaction GTP + H2O = GDP + phosphate + H(+). In terms of biological role, promotes mitochondrial protein synthesis. May act as a fidelity factor of the translation reaction, by catalyzing a one-codon backward translocation of tRNAs on improperly translocated ribosomes. Binds to mitochondrial ribosomes in a GTP-dependent manner. The protein is Translation factor GUF1, mitochondrial of Meyerozyma guilliermondii (strain ATCC 6260 / CBS 566 / DSM 6381 / JCM 1539 / NBRC 10279 / NRRL Y-324) (Yeast).